The primary structure comprises 794 residues: uncharacterized protein (794 aa).

A signal peptide spans 1-22 (MKFKYGAIVFSGLLGVSAILAA). Residue cysteine 23 is the site of N-palmitoyl cysteine attachment. Cysteine 23 carries S-diacylglycerol cysteine lipidation. Composition is skewed to polar residues over residues 182 to 200 (TSVQ…NNGV) and 245 to 261 (QMST…DANQ). Disordered stretches follow at residues 182 to 208 (TSVQ…KIDK), 222 to 261 (NKAK…DANQ), 474 to 529 (FKIK…GKNG), 566 to 594 (SAAK…TEQK), and 737 to 757 (KNEK…RGKQ). A compositionally biased stretch (low complexity) spans 475–501 (KIKSSNKSKSSSSKSSTKAETGKTSGG). The segment covering 511–526 (GAQNQGKKGEGAQNQG) has biased composition (polar residues). Positions 567-576 (AAKKEDKKSG) are enriched in basic and acidic residues. Residues 577-593 (ESTTEQTQIQSKSVTEQ) show a composition bias toward polar residues. The segment covering 737 to 751 (KNEKKEGSDQKDSKS) has biased composition (basic and acidic residues).

The protein belongs to the MG185/MG260 family.

It is found in the cell membrane. This is an uncharacterized protein from Mycoplasma pneumoniae (strain ATCC 29342 / M129 / Subtype 1) (Mycoplasmoides pneumoniae).